A 341-amino-acid chain; its full sequence is Serine/threonine-protein kinase pdik1l (341 aa).

The region spanning 8-332 (YELIQEVGRG…FELELRLVRI (325 aa)) is the Protein kinase domain. Position 14–22 (14–22 (VGRGSYGVV)) interacts with ATP. Catalysis depends on Asp164, which acts as the Proton acceptor.

This sequence belongs to the protein kinase superfamily. Ser/Thr protein kinase family.

It is found in the nucleus. It catalyses the reaction L-seryl-[protein] + ATP = O-phospho-L-seryl-[protein] + ADP + H(+). It carries out the reaction L-threonyl-[protein] + ATP = O-phospho-L-threonyl-[protein] + ADP + H(+). The polypeptide is Serine/threonine-protein kinase pdik1l (pdik1l) (Danio rerio (Zebrafish)).